Consider the following 260-residue polypeptide: Tropinone reductase homolog At1g07450 (260 aa).

14–38 (LVTGGSKGIGYAIVEELVGFGARVH) contributes to the NADP(+) binding site. Substrate is bound at residue Ser147. Residue Tyr159 is the Proton acceptor of the active site.

Belongs to the short-chain dehydrogenases/reductases (SDR) family. SDR65C subfamily.

This Arabidopsis thaliana (Mouse-ear cress) protein is Tropinone reductase homolog At1g07450.